Here is a 140-residue protein sequence, read N- to C-terminus: Nucleoside diphosphate kinase (140 aa).

K11, F59, R87, T93, R104, and N114 together coordinate ATP. H117 acts as the Pros-phosphohistidine intermediate in catalysis.

The protein belongs to the NDK family. In terms of assembly, homotetramer. Mg(2+) is required as a cofactor.

It is found in the cytoplasm. It carries out the reaction a 2'-deoxyribonucleoside 5'-diphosphate + ATP = a 2'-deoxyribonucleoside 5'-triphosphate + ADP. The catalysed reaction is a ribonucleoside 5'-diphosphate + ATP = a ribonucleoside 5'-triphosphate + ADP. Functionally, major role in the synthesis of nucleoside triphosphates other than ATP. The ATP gamma phosphate is transferred to the NDP beta phosphate via a ping-pong mechanism, using a phosphorylated active-site intermediate. The sequence is that of Nucleoside diphosphate kinase from Bartonella henselae (strain ATCC 49882 / DSM 28221 / CCUG 30454 / Houston 1) (Rochalimaea henselae).